A 242-amino-acid polypeptide reads, in one-letter code: Carboxy-S-adenosyl-L-methionine synthase (242 aa).

S-adenosyl-L-methionine contacts are provided by residues Tyr-38, 63-65, 88-89, 116-117, and Arg-199; these read GCS, DN, and DL.

This sequence belongs to the class I-like SAM-binding methyltransferase superfamily. Cx-SAM synthase family. In terms of assembly, homodimer.

It catalyses the reaction prephenate + S-adenosyl-L-methionine = carboxy-S-adenosyl-L-methionine + 3-phenylpyruvate + H2O. Its function is as follows. Catalyzes the conversion of S-adenosyl-L-methionine (SAM) to carboxy-S-adenosyl-L-methionine (Cx-SAM). The chain is Carboxy-S-adenosyl-L-methionine synthase from Methylococcus capsulatus (strain ATCC 33009 / NCIMB 11132 / Bath).